The primary structure comprises 168 residues: CASP-like protein 4D1 (168 aa).

The Cytoplasmic segment spans residues 1–11 (MAPPPPSLASR). A helical transmembrane segment spans residues 12–32 (MAALILRILTFIFLIASLVIL). Residues 33-57 (TTNTATLELDLVEVKVHFKDVYAYR) are Extracellular-facing. A helical transmembrane segment spans residues 58-78 (YMLATIVIGLAYTVLQIAFTL). Topologically, residues 79–97 (YYVATGNRMMSGDGNLAFD) are cytoplasmic. A helical transmembrane segment spans residues 98-118 (FFGDKVISYILVTGAAAGFAS). Residues 119–144 (TKDIKPVFSGSGDFDAFINKGYASAS) lie on the Extracellular side of the membrane. A helical transmembrane segment spans residues 145–165 (LLLIGFVCTAVLSVFSSYALP). The Cytoplasmic portion of the chain corresponds to 166–168 (KQV).

It belongs to the Casparian strip membrane proteins (CASP) family. In terms of assembly, homodimer and heterodimers.

Its subcellular location is the cell membrane. The chain is CASP-like protein 4D1 from Ricinus communis (Castor bean).